The chain runs to 105 residues: ATP synthase subunit c (105 aa).

Transmembrane regions (helical) follow at residues 3–23 (FLAL…GGMG), 32–52 (SILG…IGMG), and 78–98 (VAMA…IIAI).

Belongs to the ATPase C chain family. As to quaternary structure, F-type ATPases have 2 components, F(1) - the catalytic core - and F(0) - the membrane proton channel. F(1) has five subunits: alpha(3), beta(3), gamma(1), delta(1), epsilon(1). F(0) has three main subunits: a(1), b(2) and c(10-14). The alpha and beta chains form an alternating ring which encloses part of the gamma chain. F(1) is attached to F(0) by a central stalk formed by the gamma and epsilon chains, while a peripheral stalk is formed by the delta and b chains.

It is found in the cell inner membrane. F(1)F(0) ATP synthase produces ATP from ADP in the presence of a proton or sodium gradient. F-type ATPases consist of two structural domains, F(1) containing the extramembraneous catalytic core and F(0) containing the membrane proton channel, linked together by a central stalk and a peripheral stalk. During catalysis, ATP synthesis in the catalytic domain of F(1) is coupled via a rotary mechanism of the central stalk subunits to proton translocation. Its function is as follows. Key component of the F(0) channel; it plays a direct role in translocation across the membrane. A homomeric c-ring of between 10-14 subunits forms the central stalk rotor element with the F(1) delta and epsilon subunits. The sequence is that of ATP synthase subunit c from Helicobacter pylori (strain P12).